The sequence spans 260 residues: uncharacterized protein (260 aa).

Residues 1 to 22 form the signal peptide; that stretch reads MGYLKRFALYISILVLIVMVAG. Cysteine 23 carries N-palmitoyl cysteine lipidation. Cysteine 23 carries the S-diacylglycerol cysteine lipid modification.

The protein belongs to the staphylococcal tandem lipoprotein family.

It is found in the cell membrane. This is an uncharacterized protein from Staphylococcus aureus (strain bovine RF122 / ET3-1).